We begin with the raw amino-acid sequence, 258 residues long: Imidazole glycerol phosphate synthase subunit HisF (258 aa).

Active-site residues include aspartate 11 and aspartate 130.

The protein belongs to the HisA/HisF family. Heterodimer of HisH and HisF.

It localises to the cytoplasm. The catalysed reaction is 5-[(5-phospho-1-deoxy-D-ribulos-1-ylimino)methylamino]-1-(5-phospho-beta-D-ribosyl)imidazole-4-carboxamide + L-glutamine = D-erythro-1-(imidazol-4-yl)glycerol 3-phosphate + 5-amino-1-(5-phospho-beta-D-ribosyl)imidazole-4-carboxamide + L-glutamate + H(+). Its pathway is amino-acid biosynthesis; L-histidine biosynthesis; L-histidine from 5-phospho-alpha-D-ribose 1-diphosphate: step 5/9. In terms of biological role, IGPS catalyzes the conversion of PRFAR and glutamine to IGP, AICAR and glutamate. The HisF subunit catalyzes the cyclization activity that produces IGP and AICAR from PRFAR using the ammonia provided by the HisH subunit. This chain is Imidazole glycerol phosphate synthase subunit HisF, found in Gluconacetobacter diazotrophicus (strain ATCC 49037 / DSM 5601 / CCUG 37298 / CIP 103539 / LMG 7603 / PAl5).